The sequence spans 590 residues: Threonine dehydratase biosynthetic, chloroplastic (590 aa).

A chloroplast-targeting transit peptide spans M1 to I44. K139 bears the N6-(pyridoxal phosphate)lysine mark. ACT-like domains are found at residues A416–H488 and E509–Y580.

Belongs to the serine/threonine dehydratase family. Pyridoxal 5'-phosphate is required as a cofactor. Found at higher levels in flowers than in other organs.

Its subcellular location is the plastid. It localises to the chloroplast. It catalyses the reaction L-threonine = 2-oxobutanoate + NH4(+). It functions in the pathway amino-acid biosynthesis; L-isoleucine biosynthesis; 2-oxobutanoate from L-threonine: step 1/1. Allosterically inhibited by isoleucine. The chain is Threonine dehydratase biosynthetic, chloroplastic from Cicer arietinum (Chickpea).